Reading from the N-terminus, the 427-residue chain is Putative FBD-associated F-box protein At3g50710 (427 aa).

The 53-residue stretch at 1 to 53 (MDRISNLSDDLLLKIVSSLPTKDVVVTMLLSKRWKFLWMMVPKLRFDDEFELE) folds into the F-box domain. Residues 345–395 (HWEEPSSVPQCLLFHLNIFEWKYYNAGDEEKKVVAYILKNARQLKTATFSA) form the FBD domain.

The protein is Putative FBD-associated F-box protein At3g50710 of Arabidopsis thaliana (Mouse-ear cress).